We begin with the raw amino-acid sequence, 429 residues long: Metacaspase-1A (429 aa).

The interval 1–68 (MQHHHQGSYG…PQHNGGQMYG (68 aa)) is disordered. The span at 8 to 19 (SYGGGGGGGGYP) shows a compositional bias: gly residues. The span at 20–45 (GQAYREQNPYGYGQQSPQQGYGAPQQ) shows a compositional bias: low complexity. Residues 46 to 62 (HNGYNQPPSGYGQPQHN) are compositionally biased toward polar residues. Residues histidine 220 and cysteine 276 contribute to the active site.

It belongs to the peptidase C14B family.

Its function is as follows. Involved in cell death (apoptosis). The sequence is that of Metacaspase-1A (casA) from Aspergillus clavatus (strain ATCC 1007 / CBS 513.65 / DSM 816 / NCTC 3887 / NRRL 1 / QM 1276 / 107).